A 597-amino-acid polypeptide reads, in one-letter code: Arginine--tRNA ligase (597 aa).

The 'HIGH' region motif lies at 125-135 (PNTNKPLHLGH).

This sequence belongs to the class-I aminoacyl-tRNA synthetase family. Monomer.

The protein resides in the cytoplasm. The catalysed reaction is tRNA(Arg) + L-arginine + ATP = L-arginyl-tRNA(Arg) + AMP + diphosphate. The polypeptide is Arginine--tRNA ligase (Bacteroides thetaiotaomicron (strain ATCC 29148 / DSM 2079 / JCM 5827 / CCUG 10774 / NCTC 10582 / VPI-5482 / E50)).